The primary structure comprises 449 residues: Bifunctional protein GlmU (449 aa).

Residues 1–229 form a pyrophosphorylase region; the sequence is MKLSAVILAA…EEDIYGINDR (229 aa). UDP-N-acetyl-alpha-D-glucosamine is bound by residues 8 to 11, Lys22, Gln73, and 78 to 79; these read LAAG and GT. A Mg(2+)-binding site is contributed by Asp102. Positions 139, 154, 169, and 227 each coordinate UDP-N-acetyl-alpha-D-glucosamine. Residue Asn227 participates in Mg(2+) binding. A linker region spans residues 230-250; sequence VQLAQAENILRQRKNRELMLS. The tract at residues 251–449 is N-acetyltransferase; it reads GVSLMDPAST…AGQKHLPRKG (199 aa). Residues Arg332 and Lys350 each contribute to the UDP-N-acetyl-alpha-D-glucosamine site. His362 serves as the catalytic Proton acceptor. The UDP-N-acetyl-alpha-D-glucosamine site is built by Tyr365 and Asn376. Acetyl-CoA contacts are provided by residues Ala379, 385-386, Ser404, Ala422, and Arg439; that span reads NY.

This sequence in the N-terminal section; belongs to the N-acetylglucosamine-1-phosphate uridyltransferase family. The protein in the C-terminal section; belongs to the transferase hexapeptide repeat family. In terms of assembly, homotrimer. Mg(2+) is required as a cofactor.

The protein resides in the cytoplasm. It carries out the reaction alpha-D-glucosamine 1-phosphate + acetyl-CoA = N-acetyl-alpha-D-glucosamine 1-phosphate + CoA + H(+). It catalyses the reaction N-acetyl-alpha-D-glucosamine 1-phosphate + UTP + H(+) = UDP-N-acetyl-alpha-D-glucosamine + diphosphate. It participates in nucleotide-sugar biosynthesis; UDP-N-acetyl-alpha-D-glucosamine biosynthesis; N-acetyl-alpha-D-glucosamine 1-phosphate from alpha-D-glucosamine 6-phosphate (route II): step 2/2. Its pathway is nucleotide-sugar biosynthesis; UDP-N-acetyl-alpha-D-glucosamine biosynthesis; UDP-N-acetyl-alpha-D-glucosamine from N-acetyl-alpha-D-glucosamine 1-phosphate: step 1/1. The protein operates within bacterial outer membrane biogenesis; LPS lipid A biosynthesis. In terms of biological role, catalyzes the last two sequential reactions in the de novo biosynthetic pathway for UDP-N-acetylglucosamine (UDP-GlcNAc). The C-terminal domain catalyzes the transfer of acetyl group from acetyl coenzyme A to glucosamine-1-phosphate (GlcN-1-P) to produce N-acetylglucosamine-1-phosphate (GlcNAc-1-P), which is converted into UDP-GlcNAc by the transfer of uridine 5-monophosphate (from uridine 5-triphosphate), a reaction catalyzed by the N-terminal domain. This chain is Bifunctional protein GlmU, found in Syntrophomonas wolfei subsp. wolfei (strain DSM 2245B / Goettingen).